A 415-amino-acid polypeptide reads, in one-letter code: Ornithine cyclodeaminase (415 aa).

NAD(+) contacts are provided by Asn-241, Ala-242, Asp-320, Thr-352, Leu-354, His-355, Asp-373, Asp-396, and Val-397.

The protein belongs to the AgrE/ArgZ ornithine cyclodeaminase family. It depends on NAD(+) as a cofactor.

It carries out the reaction L-ornithine = L-proline + NH4(+). Functionally, catalyzes the conversion of ornithine to proline, with the release of ammonia. The polypeptide is Ornithine cyclodeaminase (Methanococcus maripaludis (strain DSM 14266 / JCM 13030 / NBRC 101832 / S2 / LL)).